The chain runs to 531 residues: Endoglucanase 7 (531 aa).

An N-terminal signal peptide occupies residues 1–27; it reads MRGRALVLVAALLLQLLLLAAAGGAGA. The active-site Nucleophile is D89. Active-site residues include H430, D482, and E491.

This sequence belongs to the glycosyl hydrolase 9 (cellulase E) family. As to expression, ubiquitous.

The protein localises to the secreted. It carries out the reaction Endohydrolysis of (1-&gt;4)-beta-D-glucosidic linkages in cellulose, lichenin and cereal beta-D-glucans.. In Oryza sativa subsp. japonica (Rice), this protein is Endoglucanase 7 (GLU10).